Reading from the N-terminus, the 316-residue chain is GTPase Era (316 aa).

The 182-residue stretch at 9 to 190 (RAGFAAIIGA…TAKLVSMMPE (182 aa)) folds into the Era-type G domain. A G1 region spans residues 17–24 (GAPNAGKS). 17–24 (GAPNAGKS) is a binding site for GTP. The G2 stretch occupies residues 43–47 (QTTRF). The segment at 64–67 (DTPG) is G3. GTP contacts are provided by residues 64–68 (DTPGI) and 140–143 (NKID). The segment at 140-143 (NKID) is G4. Residues 169–171 (ISA) are G5. Residues 221 to 298 (VHEELPYAAT…HLFLHVKVKE (78 aa)) form the KH type-2 domain.

This sequence belongs to the TRAFAC class TrmE-Era-EngA-EngB-Septin-like GTPase superfamily. Era GTPase family. As to quaternary structure, monomer.

The protein resides in the cytoplasm. The protein localises to the cell inner membrane. Its function is as follows. An essential GTPase that binds both GDP and GTP, with rapid nucleotide exchange. Plays a role in 16S rRNA processing and 30S ribosomal subunit biogenesis and possibly also in cell cycle regulation and energy metabolism. This is GTPase Era from Caulobacter vibrioides (strain ATCC 19089 / CIP 103742 / CB 15) (Caulobacter crescentus).